Reading from the N-terminus, the 326-residue chain is Dolichyl-phosphate beta-glucosyltransferase (326 aa).

Topologically, residues 1–7 are lumenal; that stretch reads MWTCLCQ. Residues 8–28 traverse the membrane as a helical segment; sequence LCFYLLSTLAVAALSIAALVL. Over 29 to 326 the chain is Cytoplasmic; sequence YKTKPYPNIK…RIASIQKKEK (298 aa).

This sequence belongs to the glycosyltransferase 2 family.

Its subcellular location is the endoplasmic reticulum membrane. It carries out the reaction a di-trans,poly-cis-dolichyl phosphate + UDP-alpha-D-glucose = a di-trans,poly-cis-dolichyl beta-D-glucosyl phosphate + UDP. It functions in the pathway protein modification; protein glycosylation. Functionally, required for normal production of N-glycosylated proteins in the endoplasmic reticulum (ER). Required for embryonic segmentation, dorsal-ventral patterning and gastrulation. Required for chitin orientation and shaping of the apical and lateral plasma membranes of epidermal cells during cuticle differentiation. Also required for correctly shaping apical membrane topology of the epithelia of other organs such as the midgut and the hindgut. The protein is Dolichyl-phosphate beta-glucosyltransferase (wol) of Drosophila melanogaster (Fruit fly).